The sequence spans 90 residues: Small ribosomal subunit protein uS15c (90 aa).

Polar residues predominate over residues 1-11; that stretch reads MVKNSFSSVIS. Residues 1 to 20 form a disordered region; that stretch reads MVKNSFSSVISQEEKKENGG.

It belongs to the universal ribosomal protein uS15 family. As to quaternary structure, part of the 30S ribosomal subunit.

It is found in the plastid. The protein localises to the chloroplast. This is Small ribosomal subunit protein uS15c (rps15) from Cucumis sativus (Cucumber).